The following is a 581-amino-acid chain: Adenine deaminase (581 aa).

It belongs to the metallo-dependent hydrolases superfamily. Adenine deaminase family. Requires Mn(2+) as cofactor.

It carries out the reaction adenine + H2O + H(+) = hypoxanthine + NH4(+). The polypeptide is Adenine deaminase (Brucella suis biovar 1 (strain 1330)).